The sequence spans 249 residues: Deoxyribose-phosphate aldolase (249 aa).

Asp-105 functions as the Proton donor/acceptor in the catalytic mechanism. Lys-168 functions as the Schiff-base intermediate with acetaldehyde in the catalytic mechanism. Lys-216 serves as the catalytic Proton donor/acceptor.

It belongs to the DeoC/FbaB aldolase family. DeoC type 1 subfamily.

The protein resides in the cytoplasm. The enzyme catalyses 2-deoxy-D-ribose 5-phosphate = D-glyceraldehyde 3-phosphate + acetaldehyde. Its pathway is carbohydrate degradation; 2-deoxy-D-ribose 1-phosphate degradation; D-glyceraldehyde 3-phosphate and acetaldehyde from 2-deoxy-alpha-D-ribose 1-phosphate: step 2/2. Catalyzes a reversible aldol reaction between acetaldehyde and D-glyceraldehyde 3-phosphate to generate 2-deoxy-D-ribose 5-phosphate. The chain is Deoxyribose-phosphate aldolase from Corynebacterium jeikeium (strain K411).